The sequence spans 141 residues: VLSPADKANVKAAWDKVGGQAGDYGAEALERMFLSFPTTKTYFPHFDLSHGSAQVKAHGKKVGDALSNAAGHLDDLPGALSALSDLHAYKLRVDPVNFKLLSHCLLVTLASHHAAEFTPAVHASLDKFLASVGTVLTSKYR.

One can recognise a Globin domain in the interval 1–141 (VLSPADKANV…VGTVLTSKYR (141 aa)). Ser3 carries the post-translational modification Phosphoserine. 2 positions are modified to N6-succinyllysine: Lys7 and Lys11. Residue Lys16 is modified to N6-acetyllysine; alternate. Lys16 carries the post-translational modification N6-succinyllysine; alternate. A Phosphotyrosine modification is found at Tyr24. Ser35 is modified (phosphoserine). Lys40 is modified (N6-succinyllysine). Ser49 bears the Phosphoserine mark. His58 lines the O2 pocket. His87 serves as a coordination point for heme b. Ser102 bears the Phosphoserine mark. Thr108 bears the Phosphothreonine mark. 2 positions are modified to phosphoserine: Ser124 and Ser131. Residues Thr134 and Thr137 each carry the phosphothreonine modification. Ser138 carries the post-translational modification Phosphoserine.

Belongs to the globin family. Heterotetramer of two alpha chains and two beta chains. Red blood cells.

Its function is as follows. Involved in oxygen transport from the lung to the various peripheral tissues. This Macroderma gigas (Australian ghost bat) protein is Hemoglobin subunit alpha-1/2.